The chain runs to 97 residues: ATP-dependent Clp protease adapter protein ClpS (97 aa).

The protein belongs to the ClpS family. Binds to the N-terminal domain of the chaperone ClpA.

Functionally, involved in the modulation of the specificity of the ClpAP-mediated ATP-dependent protein degradation. The protein is ATP-dependent Clp protease adapter protein ClpS of Nostoc sp. (strain PCC 7120 / SAG 25.82 / UTEX 2576).